Consider the following 363-residue polypeptide: DNA replication and repair protein RecF (363 aa).

30 to 37 (GNNAQGKT) contacts ATP.

Belongs to the RecF family.

The protein resides in the cytoplasm. The RecF protein is involved in DNA metabolism; it is required for DNA replication and normal SOS inducibility. RecF binds preferentially to single-stranded, linear DNA. It also seems to bind ATP. The polypeptide is DNA replication and repair protein RecF (Clostridium acetobutylicum (strain ATCC 824 / DSM 792 / JCM 1419 / IAM 19013 / LMG 5710 / NBRC 13948 / NRRL B-527 / VKM B-1787 / 2291 / W)).